The primary structure comprises 712 residues: Lactoperoxidase (712 aa).

Positions Met-1–Ala-21 are cleaved as a signal peptide. Residues Ser-22–Leu-117 constitute a propeptide that is removed on maturation. Asn-106 carries an N-linked (GlcNAc...) (complex) asparagine; alternate glycan. Residue Asn-106 is glycosylated (N-linked (GlcNAc...) (hybrid) asparagine; alternate). Intrachain disulfides connect Cys-123-Cys-284, Cys-132-Cys-145, Cys-246-Cys-256, and Cys-250-Cys-274. Asn-212 carries N-linked (GlcNAc...) (complex) asparagine; alternate glycosylation. Residue Asn-212 is glycosylated (N-linked (GlcNAc...) (hybrid) asparagine; alternate). Asp-225 serves as a coordination point for heme b. His-226 functions as the Proton acceptor in the catalytic mechanism. Position 227 (Asp-227) interacts with Ca(2+). Ca(2+) contacts are provided by Thr-301, Phe-303, Asp-305, and Ser-307. Phosphoserine is present on Ser-315. An N-linked (GlcNAc...) (high mannose) asparagine glycan is attached at Asn-322. Cys-354 and Cys-365 are oxidised to a cystine. The N-linked (GlcNAc...) asparagine glycan is linked to Asn-358. Position 375 (Glu-375) interacts with heme b. Asn-449 carries an N-linked (GlcNAc...) (complex) asparagine; alternate glycan. A glycan (N-linked (GlcNAc...) (hybrid) asparagine; alternate) is linked at Asn-449. Asn-449 carries N-linked (GlcNAc...) (high mannose) asparagine; alternate glycosylation. His-468 contributes to the heme b binding site. 3'-nitrotyrosine is present on Tyr-482. 2 cysteine pairs are disulfide-bonded: Cys-573–Cys-630 and Cys-671–Cys-696.

Belongs to the peroxidase family. XPO subfamily. The cofactor is Ca(2+). It depends on heme b as a cofactor. In terms of tissue distribution, mammary gland; milk.

The protein resides in the secreted. Its subcellular location is the cytoplasm. The catalysed reaction is 2 a phenolic donor + H2O2 = 2 a phenolic radical donor + 2 H2O. The enzyme catalyses thiocyanate + H2O2 + H(+) = hypothiocyanous acid + H2O. It catalyses the reaction iodide + H2O2 = hypoiodite + H2O. Its activity is regulated as follows. Inhibited by small molecule methimazole (MMZ). Its function is as follows. Heme-containing oxidoreductase which catalyzes the conversion of thiocyanate (SCN(-)) into antimicrobial agent hypothiocyanous acid (OSCN(-)) in the presence of hydrogen peroxide (H2O2). Also involved in the conversion of iodide (I(-)) into hypoiodite (IO(-)) in the presence of H2O2. Responsible for the inactivation of a wide range of micro-organisms and hence, important component of defense mechanism. Shows antibacterial properties against several Gram-positive bacteria including some Staphylococcus species and Gram-negative bacteria including E.coli, P.aeruginosa and some Salmonella species. Inhibits the growth of several fungi including A.niger, Trichoderma species, C.cassicola, P.meadii and C.salmonicolor. Does not have anti-fungal activity towards C.albicans and Pythium species. May protect the udder from infection and may promote growth in newborns. May be implicated in airway host defense against infection. May contribute to maintaining an appropriate H2O2 cellular level, therefore protecting cells from H2O2-caused injuries and inflammation. In Capra hircus (Goat), this protein is Lactoperoxidase (LPO).